Reading from the N-terminus, the 187-residue chain is uncharacterized protein (187 aa).

Residues 1-25 (MSKFVKTAIAAAMVMGAFTSTATIA) form the signal peptide.

Belongs to the fimbrial protein family.

Part of the yfcOPQRSUV fimbrial operon. Could contribute to adhesion to various surfaces in specific environmental niches. Increases adhesion to eukaryotic T24 bladder epithelial cells in the absence of fim genes. This is an uncharacterized protein from Escherichia coli (strain K12).